The primary structure comprises 445 residues: Proton extrusion protein PxcA (445 aa).

A run of 4 helical transmembrane segments spans residues phenylalanine 227–isoleucine 247, alanine 322–phenylalanine 342, leucine 369–isoleucine 389, and phenylalanine 405–isoleucine 425.

It belongs to the CemA family.

It localises to the cell inner membrane. In terms of biological role, required for H(+) efflux immediately after light irradiation to form a rapid H(+) concentration gradient across the thylakoid membranes. Together with PxcL, contributes to transient H(+) uptake following dark to light transition. The polypeptide is Proton extrusion protein PxcA (Microcystis aeruginosa (strain NIES-843 / IAM M-2473)).